We begin with the raw amino-acid sequence, 196 residues long: Beta-crystallin A2 (196 aa).

The tract at residues Met1–Gln11 is N-terminal arm. 2 Beta/gamma crystallin 'Greek key' domains span residues Tyr12–Ser51 and Gly52–Lys98. The interval Cys99 to Asp104 is connecting peptide. 2 Beta/gamma crystallin 'Greek key' domains span residues Ser105 to Ala146 and Gly147 to Gln195.

Belongs to the beta/gamma-crystallin family. Homo/heterodimer, or complexes of higher-order. The structure of beta-crystallin oligomers seems to be stabilized through interactions between the N-terminal arms.

Its function is as follows. Crystallins are the dominant structural components of the vertebrate eye lens. The sequence is that of Beta-crystallin A2 (CRYBA2) from Gallus gallus (Chicken).